The following is a 181-amino-acid chain: Large ribosomal subunit protein uL5 (181 aa).

This sequence belongs to the universal ribosomal protein uL5 family. In terms of assembly, part of the 50S ribosomal subunit; part of the 5S rRNA/L5/L18/L25 subcomplex. Contacts the 5S rRNA and the P site tRNA. Forms a bridge to the 30S subunit in the 70S ribosome.

This is one of the proteins that bind and probably mediate the attachment of the 5S RNA into the large ribosomal subunit, where it forms part of the central protuberance. In the 70S ribosome it contacts protein S13 of the 30S subunit (bridge B1b), connecting the 2 subunits; this bridge is implicated in subunit movement. Contacts the P site tRNA; the 5S rRNA and some of its associated proteins might help stabilize positioning of ribosome-bound tRNAs. This chain is Large ribosomal subunit protein uL5, found in Campylobacter lari (strain RM2100 / D67 / ATCC BAA-1060).